A 230-amino-acid chain; its full sequence is Acetyltransferase (230 aa).

The region spanning 143-230 is the N-acetyltransferase domain; the sequence is RYLDGKVICD…RVAVYKARQT (88 aa).

It participates in mycotoxin biosynthesis. In terms of biological role, acetyltransferase; part of the satratoxin SC3 cluster involved in the biosynthesis of satratoxins, trichothecene mycotoxins that are associated with human food poisonings. Satratoxins are suggested to be made by products of multiple gene clusters (SC1, SC2 and SC3) that encode 21 proteins in all, including polyketide synthases, acetyltransferases, and other enzymes expected to modify the trichothecene skeleton. SC1 encodes 10 proteins, SAT1 to SAT10. The largest are SAT8, which encodes a putative polyketide synthase (PKS) with a conventional non-reducing architecture, and SAT10, a putative protein containing four ankyrin repeats and thus may be involved in protein scaffolding. The putative short-chain reductase SAT3 may assist the PKS in some capacity. SAT6 contains a secretory lipase domain and acts probably as a trichothecene esterase. SAT5 encodes a putative acetyltransferase, and so, with SAT6, may affect endogenous protection from toxicity. The probable transcription factor SAT9 may regulate the expression of the SC1 cluster. SC2 encodes proteins SAT11 to SAT16, the largest of which encodes the putative reducing PKS SAT13. SAT11 is a cytochrome P450 monooxygenase, while SAT14 and SAT16 are probable acetyltransferases. The SC2 cluster may be regulated by the transcription factor SAT15. SC3 is a small cluster that encodes 5 proteins, SAT17 to SAT21. SAT21 is a putative MFS-type transporter which may have a role in exporting secondary metabolites. The four other proteins putatively encoded in SC3 include the taurine hydroxylase-like protein SAT17, the O-methyltransferase SAT18, the acetyltransferase SAT19, and the Cys6-type zinc finger SAT20, the latter being probably involved in regulation of SC3 expression. In Stachybotrys chartarum (strain CBS 109288 / IBT 7711) (Toxic black mold), this protein is Acetyltransferase.